Reading from the N-terminus, the 121-residue chain is Large ribosomal subunit protein bL12 (121 aa).

The protein belongs to the bacterial ribosomal protein bL12 family. In terms of assembly, homodimer. Part of the ribosomal stalk of the 50S ribosomal subunit. Forms a multimeric L10(L12)X complex, where L10 forms an elongated spine to which 2 to 4 L12 dimers bind in a sequential fashion. Binds GTP-bound translation factors.

Functionally, forms part of the ribosomal stalk which helps the ribosome interact with GTP-bound translation factors. Is thus essential for accurate translation. The sequence is that of Large ribosomal subunit protein bL12 from Clostridium beijerinckii (strain ATCC 51743 / NCIMB 8052) (Clostridium acetobutylicum).